The primary structure comprises 330 residues: RNA polymerase sigma factor RpoS (330 aa).

The sigma-70 factor domain-1 stretch occupies residues 56–89; the sequence is DATQLYLGEIGYSPLLTAEEEVYFARRALRGDVA. Residues 94–164 form a sigma-70 factor domain-2 region; the sequence is MIESNLRLVV…ERAIMNQTRT (71 aa). An Interaction with polymerase core subunit RpoC motif is present at residues 118–121; that stretch reads DLIE. Residues 174 to 249 are sigma-70 factor domain-3; sequence ELNVYLRTAR…DEKENGPEDT (76 aa). The sigma-70 factor domain-4 stretch occupies residues 262–315; sequence WLFELNAKQREVLARRFGLLGYEAATLEDVGREIGLTRERVRQIQVEGLRRLRE. A DNA-binding region (H-T-H motif) is located at residues 288-307; it reads LEDVGREIGLTRERVRQIQV.

It belongs to the sigma-70 factor family. RpoS subfamily. Interacts with the RNA polymerase core enzyme and RssB.

The protein resides in the cytoplasm. Functionally, sigma factors are initiation factors that promote the attachment of RNA polymerase to specific initiation sites and are then released. This sigma factor is the master transcriptional regulator of the stationary phase and the general stress response. Controls, positively or negatively, the expression of several hundred genes, which are mainly involved in metabolism, transport, regulation and stress management. Protects stationary phase cells from killing induced by endoribonuclease MazF. In Escherichia coli (strain K12), this protein is RNA polymerase sigma factor RpoS.